The following is a 103-amino-acid chain: ATP synthase F(0) complex subunit g, mitochondrial (103 aa).

Ala-2 carries the post-translational modification N-acetylalanine. N6-acetyllysine occurs at positions 11, 24, 35, and 54.

It belongs to the ATPase g subunit family. In terms of assembly, component of the ATP synthase complex composed at least of ATP5F1A/subunit alpha, ATP5F1B/subunit beta, ATP5MC1/subunit c (homooctomer), MT-ATP6/subunit a, MT-ATP8/subunit 8, ATP5ME/subunit e, ATP5MF/subunit f, ATP5MG/subunit g, ATP5MK/subunit k, ATP5MJ/subunit j, ATP5F1C/subunit gamma, ATP5F1D/subunit delta, ATP5F1E/subunit epsilon, ATP5PF/subunit F6, ATP5PB/subunit b, ATP5PD/subunit d, ATP5PO/subunit OSCP. ATP synthase complex consists of a soluble F(1) head domain (subunits alpha(3) and beta(3)) - the catalytic core - and a membrane F(0) domain - the membrane proton channel (subunits c, a, 8, e, f, g, k and j). These two domains are linked by a central stalk (subunits gamma, delta, and epsilon) rotating inside the F1 region and a stationary peripheral stalk (subunits F6, b, d, and OSCP).

The protein localises to the mitochondrion. It localises to the mitochondrion inner membrane. Its function is as follows. Subunit g, of the mitochondrial membrane ATP synthase complex (F(1)F(0) ATP synthase or Complex V) that produces ATP from ADP in the presence of a proton gradient across the membrane which is generated by electron transport complexes of the respiratory chain. ATP synthase complex consist of a soluble F(1) head domain - the catalytic core - and a membrane F(1) domain - the membrane proton channel. These two domains are linked by a central stalk rotating inside the F(1) region and a stationary peripheral stalk. During catalysis, ATP synthesis in the catalytic domain of F(1) is coupled via a rotary mechanism of the central stalk subunits to proton translocation. In vivo, can only synthesize ATP although its ATP hydrolase activity can be activated artificially in vitro. Part of the complex F(0) domain. This chain is ATP synthase F(0) complex subunit g, mitochondrial, found in Pongo abelii (Sumatran orangutan).